A 440-amino-acid polypeptide reads, in one-letter code: Xaa-Pro dipeptidase (440 aa).

Mn(2+) contacts are provided by D244, D255, H336, E381, and E420.

This sequence belongs to the peptidase M24B family. Mn(2+) is required as a cofactor. The N-terminus is blocked.

It catalyses the reaction Xaa-L-Pro dipeptide + H2O = an L-alpha-amino acid + L-proline. The enzyme catalyses diisopropyl fluorophosphate + H2O = diisopropyl phosphate + fluoride + 2 H(+). Splits dipeptides with a prolyl or hydroxyprolyl residue in the C-terminal position and a nonpolar amino acid at the N-terminal position. Also catalyzes the hydrolysis of toxic organophosphorus cholinesterase-inhibiting compounds including nerve gases such as diisopropylfluorophosphate (DFP), O-isopropyl methylphosphonofluoridate (sarin), O-pinacolyl methylphosphonofluoridate (soman), and O-cyclohexyl methylphosphonofluoridate. This chain is Xaa-Pro dipeptidase (pepQ), found in Pseudoalteromonas haloplanktis (Alteromonas haloplanktis).